The following is a 232-amino-acid chain: Flagellar L-ring protein (232 aa).

A signal peptide spans 1–21 (MQKNAAHTYAISSLLVLSLTG). Residue Cys22 is the site of N-palmitoyl cysteine attachment. A lipid anchor (S-diacylglycerol cysteine) is attached at Cys22.

The protein belongs to the FlgH family. As to quaternary structure, the basal body constitutes a major portion of the flagellar organelle and consists of four rings (L,P,S, and M) mounted on a central rod.

Its subcellular location is the cell outer membrane. The protein resides in the bacterial flagellum basal body. Its function is as follows. Assembles around the rod to form the L-ring and probably protects the motor/basal body from shearing forces during rotation. This Shigella dysenteriae serotype 1 (strain Sd197) protein is Flagellar L-ring protein.